The following is a 153-amino-acid chain: Small ribosomal subunit protein uS13 (153 aa).

Belongs to the universal ribosomal protein uS13 family. Part of the 30S ribosomal subunit. Forms a loose heterodimer with protein S19. Forms two bridges to the 50S subunit in the 70S ribosome.

Functionally, located at the top of the head of the 30S subunit, it contacts several helices of the 16S rRNA. In the 70S ribosome it contacts the 23S rRNA (bridge B1a) and protein L5 of the 50S subunit (bridge B1b), connecting the 2 subunits; these bridges are implicated in subunit movement. The polypeptide is Small ribosomal subunit protein uS13 (Pyrobaculum calidifontis (strain DSM 21063 / JCM 11548 / VA1)).